The sequence spans 394 residues: Endothelial cell-selective adhesion molecule (394 aa).

An N-terminal signal peptide occupies residues 1–29 (MILQAGTPETSLLRVLFLGLSTLAAFSRA). The Extracellular portion of the chain corresponds to 30–251 (QMELHVPPGL…LDVMTGSKAA (222 aa)). In terms of domain architecture, Ig-like V-type spans 37-146 (PGLNKLEAVE…EGKSIGHSIK (110 aa)). 4 N-linked (GlcNAc...) asparagine glycosylation sites follow: Asn111, Asn172, Asn216, and Asn239. One can recognise an Ig-like C2-type domain in the interval 159-243 (PSCSLQGVPY…GFAKCNVTLD (85 aa)). Cys177 and Cys227 are disulfide-bonded. The helical transmembrane segment at 252 to 272 (VVAGAVVGTFVGLVLIAGLVL) threads the bilayer. Residues 273 to 394 (LYQRRSKTLE…PAQSQAGSLV (122 aa)) lie on the Cytoplasmic side of the membrane. Ser304 bears the Phosphoserine mark. Composition is skewed to polar residues over residues 304-318 (SDTISKNGTLSSVTS) and 335-347 (FTPTPSVSSQALS). The disordered stretch occupies residues 304 to 372 (SDTISKNGTL…SLTPGGVSSS (69 aa)). Phosphothreonine is present on residues Thr336 and Thr338. 4 positions are modified to phosphoserine: Ser340, Ser343, Ser348, and Ser375.

In terms of assembly, interacts with MAGI1. In terms of tissue distribution, highly expressed in the heart and lung. Weakly expressed in the kidney and skin. Expression is restricted to the vascular endothelial cells. Expressed in the kidney, heart and tongue (at protein level). Also expressed on megakaryocytes and activated platelets.

The protein localises to the cell junction. Its subcellular location is the adherens junction. It localises to the tight junction. The protein resides in the cell membrane. Functionally, can mediate aggregation most likely through a homophilic molecular interaction. The polypeptide is Endothelial cell-selective adhesion molecule (Esam) (Mus musculus (Mouse)).